The chain runs to 204 residues: Large ribosomal subunit protein eL15 (204 aa).

Belongs to the eukaryotic ribosomal protein eL15 family. As to quaternary structure, component of the large ribosomal subunit.

Its subcellular location is the cytoplasm. In terms of biological role, component of the large ribosomal subunit. The ribosome is a large ribonucleoprotein complex responsible for the synthesis of proteins in the cell. In Anguilla japonica (Japanese eel), this protein is Large ribosomal subunit protein eL15 (rpl15).